The following is a 40-amino-acid chain: Trypsin inhibitor (40 aa).

Monomer.

It catalyses the reaction Preferential cleavage: Arg-|-Xaa, Lys-|-Xaa.. Its function is as follows. Inhibits trypsin but not chymotrypsin, papain or porcine pancreatic alpha-amylase. Has insecticidal activity against A.aegypti. Functions by inhibiting the A.aegypti midgut proteases to reduce the survival of larva and adults. In Cassia leiandra (Marimari), this protein is Trypsin inhibitor.